Consider the following 590-residue polypeptide: Probable metalloendopeptidase G1-type (590 aa).

A Zn(2+)-binding site is contributed by His41. Glu44 is a catalytic residue. His45 lines the Zn(2+) pocket.

The protein belongs to the peptidase M44 family. Zn(2+) serves as cofactor.

Functionally, seems to be involved in viral proteins maturation by cleavage at Ala-Gly-|-Xaa motifs. This Homo sapiens (Human) protein is Probable metalloendopeptidase G1-type.